We begin with the raw amino-acid sequence, 205 residues long: Ypt/Rab-type GTPase ypt7 (205 aa).

Residues 17 to 23, 33 to 40, Gly-66, 125 to 128, and 157 to 159 each bind GTP; these read SGVGKTS, FSASYKAT, NKID, and SAK. The Effector region signature appears at 37–45; it reads YKATIGADF. S-geranylgeranyl cysteine attachment occurs at residues Cys-203 and Cys-205. Cys-205 is subject to Cysteine methyl ester.

This sequence belongs to the small GTPase superfamily. Rab family. Interacts with the Rab GDP dissociation inhibitor GDI1.

It is found in the vacuole. Rab activation is generally mediated by a guanine exchange factor (GEF), while inactivation through hydrolysis of bound GTP is catalyzed by a GTPase activating protein (GAP). In terms of biological role, ypt/Rab-type GTPases are key regulators of membrane trafficking and intracellular vesicular transport. They act as molecular switches that convert between GTP-bound and GDP-bound states, and regulate virtually all steps of membrane traffic from the formation of the transport vesicle at the donor membrane to its fusion at the target membrane. In the GDP-bound state, Ypt proteins are predominantly cytosolic, solubilized through the interaction with a GDP dissociation inhibitor (GDI). In the GTP-bound state, the proteins are membrane bound and interact with specific effector proteins that select cargo, promote vesicle movement, or verify the correct site of fusion. Required for fungal morphogenesis, vacuole fusion, autophagy, stress resistance and pathogenicity. The protein is Ypt/Rab-type GTPase ypt7 of Pyricularia oryzae (strain 70-15 / ATCC MYA-4617 / FGSC 8958) (Rice blast fungus).